Here is a 465-residue protein sequence, read N- to C-terminus: Endo-1,3-1,4-beta-glycanase ExsH (465 aa).

Hemolysin-type calcium-binding repeat units lie at residues 33-50, 105-122, and 123-140; these read HGTA…VNVT, FGNE…TQTI, and DGRG…ADTF. One can recognise a GH16 domain in the interval 206 to 462; that stretch reads AHQFRLSLDR…YIKAYSLDAD (257 aa). Catalysis depends on glutamate 349, which acts as the Nucleophile. Residue glutamate 354 is the Proton donor of the active site.

This sequence belongs to the glycosyl hydrolase 16 family.

Its subcellular location is the secreted. It functions in the pathway glycan metabolism; exopolysaccharide biosynthesis. In terms of biological role, cleaves high molecular weight succinoglycan to yield LMW succinoglycan. Dynamically regulates the molecular weight distribution of succinoglycan by cleaving nascent succinoglycan only during a limited period after its synthesis, perhaps before it undergoes a time-dependent change in its conformation or aggregation state. This chain is Endo-1,3-1,4-beta-glycanase ExsH (exsH), found in Rhizobium meliloti (strain 1021) (Ensifer meliloti).